The chain runs to 795 residues: Forkhead box protein P4 (795 aa).

A compositionally biased stretch (polar residues) spans 1-25 (MMVESASETIRSAPSGQNGVGSLSA). The interval 1–62 (MMVESASETI…SGGADSNGEM (62 aa)) is disordered. Over residues 36-45 (AGTAPAAGRD) the composition is skewed to low complexity. Serine 58 and serine 92 each carry phosphoserine. Residue lysine 181 forms a Glycyl lysine isopeptide (Lys-Gly) (interchain with G-Cter in SUMO2) linkage. Disordered stretches follow at residues 233–252 (PQLWKGEGAPGQPAEDSGRQ) and 265–310 (TSFA…PLYG). Basic and acidic residues predominate over residues 292-303 (SRRDSSSHEETP). The segment at 312–337 (GECKWPGCETLCEDLGQFIKHLNTEH) adopts a C2H2-type zinc-finger fold. Positions 354–375 (VQQLEIQLAKESERLQAMMAHL) are leucine-zipper. Residues 379 to 437 (PSEPKPFSQPVTVSADPFPDGLVHPPTSAAAPVTPLRPPGLGSASLHSGGPARRRSNDK) form a disordered region. Lysine 383 is covalently cross-linked (Glycyl lysine isopeptide (Lys-Gly) (interchain with G-Cter in SUMO2)). Positions 459–549 (RPPFTYASLI…PPKMTGSPTL (91 aa)) form a DNA-binding region, fork-head. Phosphoserine is present on serine 546. Residues 589–671 (ASSLLPLSQE…LEEDLGGEDM (83 aa)) are disordered. The span at 609 to 627 (SNGSSSPPRLSPPQYSHQI) shows a compositional bias: polar residues. Over residues 628 to 642 (QVKEEPAEAEEDRRP) the composition is skewed to basic and acidic residues.

Forms homodimers and heterodimers with FOXP1 and FOXP2. Dimerization is required for DNA-binding. As to expression, expressed in the adult heart, brain, spleen lung, liver, kidney and testes.

It localises to the nucleus. Transcriptional repressor that represses lung-specific expression. This chain is Forkhead box protein P4, found in Mus musculus (Mouse).